The sequence spans 283 residues: MIARILDGRTCAEKVKARVKENIRLLQEKGLPSPGLAVILVGNDPASATYVAHKERACQAVGIRSTVYRMPNTITESELASKIDECNRDSNTHGILLQLPLPAHIDPANLLERIRPDKDVDGFHPYNLGRLVQRRPALRPCTPYGVMTLLTETHENLEGKHAVIIGASNIVGRPMALELLLAKCTVTVCHRFTRDLAEHVKSAELLIVAIGKPGIIQSEWIKPGAIVIDVGFSRLSPNKIAGDIDFETAKERASWITPVPGGVGPMTVATLLENTLQAAQTFL.

166 to 168 provides a ligand contact to NADP(+); the sequence is GAS.

Belongs to the tetrahydrofolate dehydrogenase/cyclohydrolase family. In terms of assembly, homodimer.

It catalyses the reaction (6R)-5,10-methylene-5,6,7,8-tetrahydrofolate + NADP(+) = (6R)-5,10-methenyltetrahydrofolate + NADPH. It carries out the reaction (6R)-5,10-methenyltetrahydrofolate + H2O = (6R)-10-formyltetrahydrofolate + H(+). It participates in one-carbon metabolism; tetrahydrofolate interconversion. Catalyzes the oxidation of 5,10-methylenetetrahydrofolate to 5,10-methenyltetrahydrofolate and then the hydrolysis of 5,10-methenyltetrahydrofolate to 10-formyltetrahydrofolate. The polypeptide is Bifunctional protein FolD (Coxiella burnetii (strain CbuK_Q154) (Coxiella burnetii (strain Q154))).